A 157-amino-acid chain; its full sequence is UPF0303 protein NT01EI_1570 (157 aa).

This sequence belongs to the UPF0303 family.

This Edwardsiella ictaluri (strain 93-146) protein is UPF0303 protein NT01EI_1570.